Here is a 59-residue protein sequence, read N- to C-terminus: Large ribosomal subunit protein uL30 (59 aa).

Belongs to the universal ribosomal protein uL30 family. Part of the 50S ribosomal subunit.

The chain is Large ribosomal subunit protein uL30 from Solidesulfovibrio magneticus (strain ATCC 700980 / DSM 13731 / RS-1) (Desulfovibrio magneticus).